A 156-amino-acid polypeptide reads, in one-letter code: Small ribosomal subunit protein uS7 (156 aa).

It belongs to the universal ribosomal protein uS7 family. As to quaternary structure, part of the 30S ribosomal subunit. Contacts proteins S9 and S11.

Its function is as follows. One of the primary rRNA binding proteins, it binds directly to 16S rRNA where it nucleates assembly of the head domain of the 30S subunit. Is located at the subunit interface close to the decoding center, probably blocks exit of the E-site tRNA. The sequence is that of Small ribosomal subunit protein uS7 from Brucella abortus (strain S19).